Consider the following 286-residue polypeptide: Non-homologous end joining protein Ku (286 aa).

In terms of domain architecture, Ku spans 10–175 (TVGLVSFPVR…EEVREPDFVV (166 aa)). A compositionally biased stretch (basic and acidic residues) spans 226-242 (ERQERQRREAGEVRQAD). The disordered stretch occupies residues 226–270 (ERQERQRREAGEVRQADETDEAAETEVPEVDIPASRAPGETGGEL). The segment covering 243-254 (ETDEAAETEVPE) has biased composition (acidic residues).

It belongs to the prokaryotic Ku family. In terms of assembly, homodimer. Interacts with LigD.

Functionally, with LigD forms a non-homologous end joining (NHEJ) DNA repair enzyme, which repairs dsDNA breaks with reduced fidelity. Binds linear dsDNA with 5'- and 3'- overhangs but not closed circular dsDNA nor ssDNA. Recruits and stimulates the ligase activity of LigD. This Actinosynnema mirum (strain ATCC 29888 / DSM 43827 / JCM 3225 / NBRC 14064 / NCIMB 13271 / NRRL B-12336 / IMRU 3971 / 101) protein is Non-homologous end joining protein Ku.